Consider the following 1052-residue polypeptide: P3N-PIPO polyprotein (1052 aa).

Residues 219–362 (KMSDQGVDML…KTMSLKIVHF (144 aa)) form the Peptidase S30 domain. Residues His-270, Asp-279, and Ser-313 each act as for P1 proteinase activity in the active site. Residues 414-417 (KITC) carry the Involved in interaction with stylet and aphid transmission motif. The short motif at 672-674 (PTK) is the Involved in virions binding and aphid transmission element. The region spanning 698–820 (MYIAKEGYCY…ESSLKHYRVG (123 aa)) is the Peptidase C6 domain. Catalysis depends on for helper component proteinase activity residues Cys-706 and His-779.

This sequence belongs to the potyviridae P3N-PIPO polyprotein family. Interacts (via PIPO domain) with host PCaP1 protein; this interaction may help to anchor the movement complex to the plasma membrane from which the complex could move to the plasmodesmata. Post-translationally, potyviral RNA is expressed as two polyproteins which undergo post-translational proteolytic processing. Genome polyprotein is processed by NIa-pro, P1 and HC-pro proteinases resulting in the production of at least ten individual proteins. P3N-PIPO is cleaved by P1 and HC-pro proteinases resulting in the production of three individual proteins. The P1 proteinase and the HC-pro cleave only their respective C-termini autocatalytically.

The protein localises to the host cell junction. It localises to the host plasmodesma. The enzyme catalyses Hydrolyzes a Gly-|-Gly bond at its own C-terminus, commonly in the sequence -Tyr-Xaa-Val-Gly-|-Gly, in the processing of the potyviral polyprotein.. Required for aphid transmission and also has proteolytic activity. Only cleaves a Gly-Gly dipeptide at its own C-terminus. Interacts with virions and aphid stylets. Acts as a suppressor of RNA-mediated gene silencing, also known as post-transcriptional gene silencing (PTGS), a mechanism of plant viral defense that limits the accumulation of viral RNAs. May have RNA-binding activity. In terms of biological role, allows efficient cell to cell propagation, by bypassing the host cell wall barrier. Transports viral genome to neighboring plant cells directly through plasmosdesmata, without any budding. The polypeptide is P3N-PIPO polyprotein (Turnip mosaic virus (strain Quebec) (TuMV)).